A 484-amino-acid polypeptide reads, in one-letter code: Probable cytochrome P450 508A1 (484 aa).

Residues 1–21 (MALFEIIISLFVVYIIHNAIS) traverse the membrane as a helical segment. Cysteine 428 contacts heme.

Belongs to the cytochrome P450 family. Requires heme as cofactor.

It localises to the membrane. This is Probable cytochrome P450 508A1 (cyp508A1-1) from Dictyostelium discoideum (Social amoeba).